The chain runs to 500 residues: Probable cytosol aminopeptidase (500 aa).

2 residues coordinate Mn(2+): Lys-265 and Asp-270. Lys-277 is an active-site residue. Asp-288, Asp-347, and Glu-349 together coordinate Mn(2+). Arg-351 is an active-site residue.

Belongs to the peptidase M17 family. Requires Mn(2+) as cofactor.

It is found in the cytoplasm. It catalyses the reaction Release of an N-terminal amino acid, Xaa-|-Yaa-, in which Xaa is preferably Leu, but may be other amino acids including Pro although not Arg or Lys, and Yaa may be Pro. Amino acid amides and methyl esters are also readily hydrolyzed, but rates on arylamides are exceedingly low.. The catalysed reaction is Release of an N-terminal amino acid, preferentially leucine, but not glutamic or aspartic acids.. Its function is as follows. Presumably involved in the processing and regular turnover of intracellular proteins. Catalyzes the removal of unsubstituted N-terminal amino acids from various peptides. The protein is Probable cytosol aminopeptidase of Rickettsia rickettsii (strain Iowa).